A 427-amino-acid chain; its full sequence is Histidine--tRNA ligase (427 aa).

The protein belongs to the class-II aminoacyl-tRNA synthetase family. In terms of assembly, homodimer.

The protein resides in the cytoplasm. It catalyses the reaction tRNA(His) + L-histidine + ATP = L-histidyl-tRNA(His) + AMP + diphosphate + H(+). This chain is Histidine--tRNA ligase, found in Deinococcus radiodurans (strain ATCC 13939 / DSM 20539 / JCM 16871 / CCUG 27074 / LMG 4051 / NBRC 15346 / NCIMB 9279 / VKM B-1422 / R1).